The following is a 123-amino-acid chain: Putative oocyte-secreted protein 1 homolog (123 aa).

The first 26 residues, 1 to 26 (MKTILGFKGLFYLHSLIWTCAGDWSA), serve as a signal peptide directing secretion.

It belongs to the PLAC1 family.

It is found in the secreted. Functionally, may be involved in cell differentiation. The chain is Putative oocyte-secreted protein 1 homolog (OOSP1) from Homo sapiens (Human).